The sequence spans 239 residues: Large ribosomal subunit protein uL2 (239 aa).

Belongs to the universal ribosomal protein uL2 family.

It is found in the cytoplasm. The sequence is that of Large ribosomal subunit protein uL2 (RPL8) from Encephalitozoon cuniculi (strain GB-M1) (Microsporidian parasite).